A 110-amino-acid chain; its full sequence is PHD finger-like domain-containing protein 5A (110 aa).

Ala-2 carries the N-acetylalanine modification. Lys-3 is modified (N6-acetyllysine). Residues Cys-11, Cys-23, Cys-26, Cys-30, Cys-33, Cys-46, Cys-49, Cys-58, Cys-61, Cys-72, and Cys-75 each coordinate Zn(2+). The interaction with SF3B1 and SF3B3 stretch occupies residues 35–51 (SYVRPCTLVRICDECNY). Residues 79–82 (EKDR) are interaction with SF3B3. Cys-85 contributes to the Zn(2+) binding site. A Phosphoserine modification is found at Ser-94.

Belongs to the PHF5 family. Component of the 17S U2 SnRNP complex, a ribonucleoprotein complex that contains small nuclear RNA (snRNA) U2 and a number of specific proteins. Part of the SF3B subcomplex of the 17S U2 SnRNP complex. SF3B associates with the splicing subcomplex SF3A and a 12S RNA unit to form the U2 small nuclear ribonucleoproteins complex (U2 snRNP). Within the SF3B complex interacts directly with SF3B1 and SF3B3. Component of the minor spliceosome, which splices U12-type introns. Within this complex, interacts with CRIPT. Interacts (via N-terminus) with U2AF1 and SRSF5; acts to bridge the two. Interacts (via C-terminus) with EP400 and DDX1; acts to bridge the two. Interacts with the PAF1 complex (PAF1C) composed of CDC73, PAF1, LEO1, CTR9, RTF1 and SKIC8. Within the PAF1C interacts directly with CDC73 and SKIC8. Interacts with RNA polymerase II. Expressed in primary spermatocytes (at protein level). Ubiquitously expressed in pre- and postnatal tissues. Highly expressed in pluripotent embryonic stem cells (ESCs) (at protein level) and induced pluripotent stem cells (iPSCs).

It localises to the nucleus. It is found in the nucleus speckle. Component of the 17S U2 SnRNP complex of the spliceosome, a large ribonucleoprotein complex that removes introns from transcribed pre-mRNAs. The 17S U2 SnRNP complex (1) directly participates in early spliceosome assembly and (2) mediates recognition of the intron branch site during pre-mRNA splicing by promoting the selection of the pre-mRNA branch-site adenosine, the nucleophile for the first step of splicing. Within the 17S U2 SnRNP complex, PHF5A is part of the SF3B subcomplex, which is required for 'A' complex assembly formed by the stable binding of U2 snRNP to the branchpoint sequence in pre-mRNA. Sequence independent binding of SF3A and SF3B subcomplexes upstream of the branch site is essential, it may anchor U2 snRNP to the pre-mRNA. Also acts as a component of the minor spliceosome, which is involved in the splicing of U12-type introns in pre-mRNAs. Also involved in elongation by RNA polymerase II as part of the PAF1 complex (PAF1C). PAF1C is required for maintenance of embryonic stem cell (ESC) self-renewal and cellular reprogramming of stem cells. Maintains pluripotency by recruiting and stabilizing PAF1C on pluripotency genes loci, and by regulating the expression of the pluripotency genes. Regulates the deposition of elongation-associated histone modifications, including dimethylated histone H3 'Lys-79' (H3K79me2) and trimethylated histone H3 'Lys-36' (H3K36me3), on PAF1C targets, self-renewal and pluripotency genes. Regulates RNA polymerase II promoter-proximal pause release of the PAF1C targets and self-renewal genes, and the levels of elongating ('Ser-2' phosphorylated) RNA polymerase II in their gene bodies. Regulates muscle specification in adult stem cells by stabilizing PAF1C in chromatin to promote myogenic differentiation. Acts as a transcriptional regulator by binding to the GJA1/Cx43 promoter and enhancing its up-regulation by ESR1/ER-alpha. The sequence is that of PHD finger-like domain-containing protein 5A (Phf5a) from Mus musculus (Mouse).